A 107-amino-acid polypeptide reads, in one-letter code: Potassium voltage-gated channel subfamily E member 3 (107 aa).

Asparagine 5, asparagine 22, and asparagine 45 each carry an N-linked (GlcNAc...) asparagine glycan. The tract at residues 31-54 is disordered; it reads CRPGPGPGSGTGPDNQTEDHRASL. A helical membrane pass occupies residues 61–81; it reads SYMYILFVMFLFAVTVGSLIL. An interaction with KCNQ1 region spans residues 72-83; the sequence is FAVTVGSLILGY. Topologically, residues 82–103 are cytoplasmic; the sequence is GYTRSRKVDKRSDPYHVYIKNR.

This sequence belongs to the potassium channel KCNE family. In terms of assembly, interacts with KCNB1. Interacts with KCNC2. Associates with KCNC4/Kv3.4. Interacts with KCNQ1; associates with a KCNQ1:KCNE3 stoichiometry of 4:4; produces a current with nearly instantaneous activation with a linear current-voltage relationship and alters membrane raft localization; affects KCNQ1 structure and gating properties.

It is found in the cell membrane. It localises to the cytoplasm. The protein resides in the perikaryon. Its subcellular location is the cell projection. The protein localises to the dendrite. It is found in the membrane raft. Functionally, ancillary protein that functions as a regulatory subunit of the voltage-gated potassium (Kv) channel complex composed of pore-forming and potassium-conducting alpha subunits and of regulatory beta subunits. KCNE3 beta subunit modulates the gating kinetics and enhances stability of the channel complex. Alters the gating of the delayed rectifier Kv channel containing KCNB1 alpha subunit. Associates with KCNC4/Kv3.4 alpha subunit to form the subthreshold Kv channel in skeletal muscle and to establish the resting membrane potential (RMP) in muscle cells. Association with KCNQ1/KCLQT1 alpha subunit may form the intestinal cAMP-stimulated potassium channel involved in chloride secretion that produces a current with nearly instantaneous activation with a linear current-voltage relationship. In Rattus norvegicus (Rat), this protein is Potassium voltage-gated channel subfamily E member 3.